The sequence spans 245 residues: Leucyl/phenylalanyl-tRNA--protein transferase (245 aa).

The protein belongs to the L/F-transferase family.

It localises to the cytoplasm. The enzyme catalyses N-terminal L-lysyl-[protein] + L-leucyl-tRNA(Leu) = N-terminal L-leucyl-L-lysyl-[protein] + tRNA(Leu) + H(+). The catalysed reaction is N-terminal L-arginyl-[protein] + L-leucyl-tRNA(Leu) = N-terminal L-leucyl-L-arginyl-[protein] + tRNA(Leu) + H(+). It catalyses the reaction L-phenylalanyl-tRNA(Phe) + an N-terminal L-alpha-aminoacyl-[protein] = an N-terminal L-phenylalanyl-L-alpha-aminoacyl-[protein] + tRNA(Phe). In terms of biological role, functions in the N-end rule pathway of protein degradation where it conjugates Leu, Phe and, less efficiently, Met from aminoacyl-tRNAs to the N-termini of proteins containing an N-terminal arginine or lysine. The sequence is that of Leucyl/phenylalanyl-tRNA--protein transferase from Paraburkholderia phymatum (strain DSM 17167 / CIP 108236 / LMG 21445 / STM815) (Burkholderia phymatum).